Here is a 210-residue protein sequence, read N- to C-terminus: NEDD4 family-interacting protein 1-like (210 aa).

The segment at 1 to 31 is disordered; it reads MAEPSGRYQQLPCEEEPEAGPQVAADAPPPY. The Cytoplasmic segment spans residues 1-105; sequence MAEPSGRYQQ…ADQLRIGNDG (105 aa). 2 short sequence motifs (PPxY motif) span residues 30 to 33 and 53 to 56; these read PYSS and PPSY. Residues 106-126 form a helical membrane-spanning segment; the sequence is IFMLTFFMAFLFNWIGFFLSF. The Extracellular segment spans residues 127–132; sequence CLTTSA. Residues 133–153 form a helical membrane-spanning segment; that stretch reads AGRYGAISGFGLSLIKWILIV. At 154–161 the chain is on the cytoplasmic side; it reads RFSTYFPG. Residues 162–182 traverse the membrane as a helical segment; the sequence is YFDGQYWLWWVFLVLGFLLFL. The Extracellular segment spans residues 183-210; sequence RGFINYAKIRKMADSFSTLPRTRVLFIY.

It localises to the golgi apparatus membrane. Its function is as follows. May play a role in Golgi structure maintenance. This is NEDD4 family-interacting protein 1-like (ndfip1l) from Danio rerio (Zebrafish).